The chain runs to 315 residues: Glutathione synthetase (315 aa).

Positions 125-310 (KLFTAWFSDL…ITGMLMDAIE (186 aa)) constitute an ATP-grasp domain. R256 carries an N-beta-linked (GlcNAc) arginine glycan. 2 residues coordinate Mg(2+): E281 and N283.

It belongs to the prokaryotic GSH synthase family. Requires Mg(2+) as cofactor. It depends on Mn(2+) as a cofactor. Glycosylation at Arg-256 by NleB enhances the glutathione synthetase activity, leading to an increase in glutathione production. Glycosylation may promote C.rodentium survival in oxidative stress conditions.

The catalysed reaction is gamma-L-glutamyl-L-cysteine + glycine + ATP = glutathione + ADP + phosphate + H(+). Its pathway is sulfur metabolism; glutathione biosynthesis; glutathione from L-cysteine and L-glutamate: step 2/2. The sequence is that of Glutathione synthetase from Citrobacter rodentium.